Reading from the N-terminus, the 1193-residue chain is Kinesin-related protein 3 (1193 aa).

The Kinesin motor domain occupies 3 to 329 (SIRVVCRFRP…LRFGSRAKNI (327 aa)). 85–92 (GQTGSGKT) contributes to the ATP binding site. Disordered regions lie at residues 377–429 (KSSG…SSNV), 573–600 (SSIA…KHAD), 611–630 (LLQR…TATS), 638–665 (ISES…ATSS), 973–1016 (GGGG…SANL), 1032–1114 (KAEP…PVKI), and 1127–1193 (FKKK…QQKD). Residues 405 to 429 (SSNLSNSVNSTSNLNTSSNTSSSNV) show a composition bias toward low complexity. Residues 450–962 (ELIKVLQEKC…SQVGVDAQNT (513 aa)) are a coiled coil. Composition is skewed to polar residues over residues 573–585 (SSIA…TPKS) and 614–630 (RTPS…TATS). Composition is skewed to low complexity over residues 643–665 (NIGS…ATSS) and 985–1006 (HSSS…NNNH). The span at 1007-1016 (TTPTPLSANL) shows a compositional bias: polar residues. Composition is skewed to low complexity over residues 1044–1078 (NTSI…IGNS), 1086–1109 (NNNS…LNGN), and 1132–1149 (PSST…QSPQ). 2 stretches are compositionally biased toward polar residues: residues 1150 to 1165 (TPSH…ISPN) and 1174 to 1193 (FSYT…QQKD).

Belongs to the TRAFAC class myosin-kinesin ATPase superfamily. Kinesin family. Kinesin subfamily. As to quaternary structure, dimer.

It is found in the cytoplasm. The protein resides in the cytoskeleton. Microtubule-associated force-producing protein that plays a role in organelle transport. Its motor activity is directed toward the microtubule's plus end. The maximal velocity in an inverted motility assay (moving microtubules on fixed motors) was 1.96 um/s. This is Kinesin-related protein 3 (kif3) from Dictyostelium discoideum (Social amoeba).